We begin with the raw amino-acid sequence, 295 residues long: Bifunctional protein FolD (295 aa).

NADP(+) contacts are provided by residues 166–168 (GRS), serine 195, and isoleucine 236.

This sequence belongs to the tetrahydrofolate dehydrogenase/cyclohydrolase family. In terms of assembly, homodimer.

It catalyses the reaction (6R)-5,10-methylene-5,6,7,8-tetrahydrofolate + NADP(+) = (6R)-5,10-methenyltetrahydrofolate + NADPH. The enzyme catalyses (6R)-5,10-methenyltetrahydrofolate + H2O = (6R)-10-formyltetrahydrofolate + H(+). Its pathway is one-carbon metabolism; tetrahydrofolate interconversion. Its function is as follows. Catalyzes the oxidation of 5,10-methylenetetrahydrofolate to 5,10-methenyltetrahydrofolate and then the hydrolysis of 5,10-methenyltetrahydrofolate to 10-formyltetrahydrofolate. The polypeptide is Bifunctional protein FolD (Chlorobium luteolum (strain DSM 273 / BCRC 81028 / 2530) (Pelodictyon luteolum)).